The sequence spans 408 residues: LL-diaminopimelate aminotransferase (408 aa).

Positions 15 and 42 each coordinate substrate. Pyridoxal 5'-phosphate contacts are provided by residues Tyr-72, 108–109 (SK), Tyr-132, Asn-187, Tyr-218, and 246–248 (SFS). Residues Lys-109, Tyr-132, and Asn-187 each contribute to the substrate site. At Lys-249 the chain carries N6-(pyridoxal phosphate)lysine. Pyridoxal 5'-phosphate is bound by residues Arg-257 and Asn-292. The substrate site is built by Asn-292 and Arg-388.

The protein belongs to the class-I pyridoxal-phosphate-dependent aminotransferase family. LL-diaminopimelate aminotransferase subfamily. In terms of assembly, homodimer. Pyridoxal 5'-phosphate serves as cofactor.

The catalysed reaction is (2S,6S)-2,6-diaminopimelate + 2-oxoglutarate = (S)-2,3,4,5-tetrahydrodipicolinate + L-glutamate + H2O + H(+). Its pathway is amino-acid biosynthesis; L-lysine biosynthesis via DAP pathway; LL-2,6-diaminopimelate from (S)-tetrahydrodipicolinate (aminotransferase route): step 1/1. Its function is as follows. Involved in the synthesis of meso-diaminopimelate (m-DAP or DL-DAP), required for both lysine and peptidoglycan biosynthesis. Catalyzes the direct conversion of tetrahydrodipicolinate to LL-diaminopimelate. In Prochlorococcus marinus (strain MIT 9312), this protein is LL-diaminopimelate aminotransferase.